Reading from the N-terminus, the 236-residue chain is MTKGQLLYEGKAKKLYTTEEPNVLLVEYKDSATAFNGEKKEEIEGKGILNNRITSLIFEKLQGNGIASHFVKQLSDTQQLVRKVDIIPIEVVVRNIVAGSLAKRIGLEEGTPLKRPIVEFYYKDDELGDPFITTEHIDVLELATSAEVSAIYDKALAINKVLQPIFADVNVTLIDFKLEFGRDADGHVLLADEISPDTCRLWDATTKQKLDKDVFRRDLGNLTEVYTIILSRLGGK.

Belongs to the SAICAR synthetase family.

It catalyses the reaction 5-amino-1-(5-phospho-D-ribosyl)imidazole-4-carboxylate + L-aspartate + ATP = (2S)-2-[5-amino-1-(5-phospho-beta-D-ribosyl)imidazole-4-carboxamido]succinate + ADP + phosphate + 2 H(+). It functions in the pathway purine metabolism; IMP biosynthesis via de novo pathway; 5-amino-1-(5-phospho-D-ribosyl)imidazole-4-carboxamide from 5-amino-1-(5-phospho-D-ribosyl)imidazole-4-carboxylate: step 1/2. The protein is Phosphoribosylaminoimidazole-succinocarboxamide synthase of Lysinibacillus sphaericus (strain C3-41).